The sequence spans 265 residues: Orotidine 5'-phosphate decarboxylase (265 aa).

Substrate-binding positions include aspartate 37, 59 to 61, 91 to 100, tyrosine 217, and arginine 235; these read KTH and DRKFADIGNT. The active-site Proton donor is lysine 93.

The protein belongs to the OMP decarboxylase family.

The catalysed reaction is orotidine 5'-phosphate + H(+) = UMP + CO2. It participates in pyrimidine metabolism; UMP biosynthesis via de novo pathway; UMP from orotate: step 2/2. This Diutina rugosa (Yeast) protein is Orotidine 5'-phosphate decarboxylase (URA3).